Consider the following 115-residue polypeptide: UPF0145 protein lp_2083 (115 aa).

Belongs to the UPF0145 family.

The protein is UPF0145 protein lp_2083 of Lactiplantibacillus plantarum (strain ATCC BAA-793 / NCIMB 8826 / WCFS1) (Lactobacillus plantarum).